We begin with the raw amino-acid sequence, 718 residues long: MLRSLWSGVNGMQAHQIALDIESNNIANVNTTGFKYSRASFVDMLSQVKLIATAPYKNGLAGQNDFSVGLGVGVDATTKIFSQGNIQNTDVKTDLAIQGDGFFIISPDRGITRNFTRDGEFLFDSQGSLVTTGGLVVQGWVRNGSDTGNKGSDTDALKVDNTGPLENIRIDPGMVMPARASNRISMRANLNAGRHADQTAAVFALDSSAKTPSDGINPVYDSGTNLAQVAEDMGSLYNEDGDALLLNENQGIWVSYKSAKMVKDILPSAENSTLELNGVKISFTNDSAVSRTSSLVAAKNAINAVKSQTGIEAYLDGKQLRLENTNELDGDEKLKNIVVTQAGTGAFANFLDGDKDVTAFKYSYTHSISPNADIGQFRTTEDLRALIQHDANIVKDPSLADNYQDSAASIGVTINQYGMFEINNKDNKNVIKENLNIFVSGYSSDSVTNNVLFKNAMKGLNTASLIEGGASASSSKFTHATHATSIDVIDSLGTKHAMRIEFYRSGGAEWNFRVIVPEPGELVGGSAARPNVFEGGRLHFNNDGSLAGMNPPLLQFDPKNGADAPQRINLAFGSSGSFDGLTSVDKISETYAIEQNGYQAGDLMDVRFDSDGVLLGAFSNGRTLALAQVALANFANDAGLQALGGNVFSQTGNSGQALIGAANTGRRGSISGSKLESSNVDLSRSLTNLIVVQRGFQANSKAVTTSDQILNTLLNLKQ.

This sequence belongs to the flagella basal body rod proteins family.

It localises to the bacterial flagellum basal body. The chain is Flagellar hook protein FlgE (flgE) from Helicobacter pylori (strain J99 / ATCC 700824) (Campylobacter pylori J99).